Consider the following 131-residue polypeptide: Large ribosomal subunit protein bL19 (131 aa).

The protein belongs to the bacterial ribosomal protein bL19 family.

Functionally, this protein is located at the 30S-50S ribosomal subunit interface and may play a role in the structure and function of the aminoacyl-tRNA binding site. The polypeptide is Large ribosomal subunit protein bL19 (Caulobacter sp. (strain K31)).